Consider the following 72-residue polypeptide: Small proline-rich protein 2D (72 aa).

Low complexity predominate over residues Met-1–Pro-11. The disordered stretch occupies residues Met-1–Thr-20. Repeat copies occupy residues Pro-21–Pro-29, Pro-30–Ser-38, and Pro-39–Pro-47. The segment at Pro-21–Pro-47 is 3 X 9 AA tandem repeats of P-K-C-P-[EQ]-P-C-P-[PS]. Composition is skewed to pro residues over residues Pro-33–Pro-47 and Pro-56–Lys-72. Residues Pro-33–Lys-72 are disordered.

This sequence belongs to the cornifin (SPRR) family.

The protein localises to the cytoplasm. Functionally, cross-linked envelope protein of keratinocytes. It is a keratinocyte protein that first appears in the cell cytosol, but ultimately becomes cross-linked to membrane proteins by transglutaminase. All that results in the formation of an insoluble envelope beneath the plasma membrane. The protein is Small proline-rich protein 2D (SPRR2D) of Homo sapiens (Human).